The primary structure comprises 203 residues: Recombination protein RecR (203 aa).

Residues 56–71 form a C4-type zinc finger; sequence CTVCGNVSDDERCRIC. Residues 79–179 enclose the Toprim domain; the sequence is SVVCVVEEPK…TVTRIASGLP (101 aa).

This sequence belongs to the RecR family.

Functionally, may play a role in DNA repair. It seems to be involved in an RecBC-independent recombinational process of DNA repair. It may act with RecF and RecO. In Mycobacterium leprae (strain TN), this protein is Recombination protein RecR.